The chain runs to 251 residues: uncharacterized protein (251 aa).

Belongs to the PaiB family.

This is an uncharacterized protein from Emericella nidulans (strain FGSC A4 / ATCC 38163 / CBS 112.46 / NRRL 194 / M139) (Aspergillus nidulans).